The following is a 381-amino-acid chain: Probable peptidoglycan glycosyltransferase FtsW (381 aa).

The Cytoplasmic segment spans residues 1 to 15; the sequence is MNNKKKIVKIFFYDK. A helical transmembrane segment spans residues 16–36; that stretch reads ILFFLLISLSIIGIIIVSSAS. At 37 to 53 the chain is on the periplasmic side; that stretch reads ISFGIRLHNDYFYFAKR. The chain crosses the membrane as a helical span at residues 54–74; the sequence is NLLYFFLSFFLFFQIIRIPIN. Residues 75–81 lie on the Cytoplasmic side of the membrane; it reads QLEKYNK. A helical transmembrane segment spans residues 82–102; it reads IALLINLFLLIIVFIIGNSIN. Residues 103–109 are Periplasmic-facing; it reads GAIRWIK. Residues 110 to 130 traverse the membrane as a helical segment; that stretch reads IGFFSIQPSECSKLILFFYIS. The Cytoplasmic segment spans residues 131–143; the sequence is DYIVKKNKELKNK. The helical transmembrane segment at 144–164 threads the bilayer; sequence LWGFLKPIIIMLIFVILLLMQ. Topologically, residues 165–166 are periplasmic; it reads PD. 2 helical membrane passes run 167–187 and 188–208; these read LGNSLILFLTTLLLFFLAGIN and LWKCCFMFLFGLLTIFILIIF. Residues 209–278 are Periplasmic-facing; that stretch reads KPYRIRRILS…FSILGEELGY (70 aa). The chain crosses the membrane as a helical span at residues 279-299; that stretch reads IGSIIILIMLFFVIFRIFLIG. Topologically, residues 300 to 317 are cytoplasmic; the sequence is KNSFIQKKFFSGYFSFSV. A helical membrane pass occupies residues 318–338; the sequence is GIWISLQTIMNVGGVIGILPI. Residues 339–343 lie on the Periplasmic side of the membrane; sequence KGLTL. Residues 344-364 form a helical membrane-spanning segment; the sequence is PFISYGGSSLITIFSAIAIVI. Over 365–381 the chain is Cytoplasmic; it reads RSDFELRINKYQAYLKQ.

The protein belongs to the SEDS family. FtsW subfamily.

The protein resides in the cell inner membrane. It carries out the reaction [GlcNAc-(1-&gt;4)-Mur2Ac(oyl-L-Ala-gamma-D-Glu-L-Lys-D-Ala-D-Ala)](n)-di-trans,octa-cis-undecaprenyl diphosphate + beta-D-GlcNAc-(1-&gt;4)-Mur2Ac(oyl-L-Ala-gamma-D-Glu-L-Lys-D-Ala-D-Ala)-di-trans,octa-cis-undecaprenyl diphosphate = [GlcNAc-(1-&gt;4)-Mur2Ac(oyl-L-Ala-gamma-D-Glu-L-Lys-D-Ala-D-Ala)](n+1)-di-trans,octa-cis-undecaprenyl diphosphate + di-trans,octa-cis-undecaprenyl diphosphate + H(+). It participates in cell wall biogenesis; peptidoglycan biosynthesis. Peptidoglycan polymerase that is essential for cell division. The chain is Probable peptidoglycan glycosyltransferase FtsW from Wigglesworthia glossinidia brevipalpis.